The sequence spans 417 residues: NADH-quinone oxidoreductase subunit D (417 aa).

It belongs to the complex I 49 kDa subunit family. As to quaternary structure, NDH-1 is composed of 14 different subunits. Subunits NuoB, C, D, E, F, and G constitute the peripheral sector of the complex.

It is found in the cell inner membrane. The catalysed reaction is a quinone + NADH + 5 H(+)(in) = a quinol + NAD(+) + 4 H(+)(out). In terms of biological role, NDH-1 shuttles electrons from NADH, via FMN and iron-sulfur (Fe-S) centers, to quinones in the respiratory chain. The immediate electron acceptor for the enzyme in this species is believed to be ubiquinone. Couples the redox reaction to proton translocation (for every two electrons transferred, four hydrogen ions are translocated across the cytoplasmic membrane), and thus conserves the redox energy in a proton gradient. This Methylibium petroleiphilum (strain ATCC BAA-1232 / LMG 22953 / PM1) protein is NADH-quinone oxidoreductase subunit D.